Consider the following 118-residue polypeptide: MICOS complex subunit MIC13 (118 aa).

Residues Met1–Ser7 are Mitochondrial matrix-facing. A helical transmembrane segment spans residues Leu8–Tyr26. Residues Asp27–Lys118 lie on the Mitochondrial intermembrane side of the membrane.

Belongs to the MICOS complex subunit Mic13 family. As to quaternary structure, component of the mitochondrial contact site and cristae organizing system (MICOS) complex, composed of at least MICOS10/MIC10, CHCHD3/MIC19, CHCHD6/MIC25, APOO/MIC26, MICOS13/MIC13, APOOL/MIC27 and IMMT/MIC60. The complex associates with mitochondrial outer membrane proteins SAMM50, MTX1 and MTX2, and with HSPA9.

It is found in the mitochondrion inner membrane. In terms of biological role, component of the MICOS complex, a large protein complex of the mitochondrial inner membrane that plays crucial roles in the maintenance of crista junctions, inner membrane architecture, and formation of contact sites to the outer membrane. Constituent of mature MICOS complex, it is required for the formation of cristae junction (CJ) and maintenance of cristae morphology. Required for the incorporation of MICOS10/MIC10 into the MICOS complex. This is MICOS complex subunit MIC13 from Macaca fascicularis (Crab-eating macaque).